We begin with the raw amino-acid sequence, 375 residues long: Adiponectin receptor protein 1 (375 aa).

The tract at residues M1 to E60 is disordered. Residues M1–G136 are Cytoplasmic-facing. A helical transmembrane segment spans residues N137–L157. Residues R158–K170 lie on the Extracellular side of the membrane. A helical transmembrane segment spans residues V171 to H191. H191 lines the Zn(2+) pocket. The Cytoplasmic portion of the chain corresponds to T192 to T203. The helical transmembrane segment at F204–L224 threads the bilayer. Topologically, residues Y225–P234 are extracellular. The helical transmembrane segment at R235–W255 threads the bilayer. Topologically, residues D256–R264 are cytoplasmic. The helical transmembrane segment at Q265 to F285 threads the bilayer. The Extracellular portion of the chain corresponds to T286–G298. Residues Q299–A319 traverse the membrane as a helical segment. The Cytoplasmic portion of the chain corresponds to R320 to H337. Zn(2+)-binding residues include H337 and H341. Residues Q338 to L358 traverse the membrane as a helical segment. Over Q359 to L375 the chain is Extracellular.

The protein belongs to the ADIPOR family. May form homooligomers and heterooligomers with ADIPOR2. Interacts with APPL2 (via BAR domain); hinders the accessibility of APPL1 to ADIPOR1; negatively regulates adiponectin signaling; ADIPOQ dissociates this interaction and facilitates the recruitment of APPL1 to ADIPOR1. Interacts with APPL1; ADIPOQ enhances this interaction; inhibites adiponectin-stimulated binding of APPL2 to ADIPOR1. As to expression, detected in brain and quadriceps muscle (at protein level). Widely expressed. Expressed in heart, kidney, liver, lung, skeletal muscle, white adipose tissue, brown adipose tissue, aorta and spleen. Weakly expressed in brain and testis.

It localises to the cell membrane. Functionally, receptor for ADIPOQ, an essential hormone secreted by adipocytes that regulates glucose and lipid metabolism. Required for normal glucose and fat homeostasis and for maintaining a normal body weight. ADIPOQ-binding activates a signaling cascade that leads to increased AMPK activity, and ultimately to increased fatty acid oxidation, increased glucose uptake and decreased gluconeogenesis. Has high affinity for globular adiponectin and low affinity for full-length adiponectin. This Mus musculus (Mouse) protein is Adiponectin receptor protein 1.